Reading from the N-terminus, the 239-residue chain is Transcriptional regulatory protein BtsR (239 aa).

Residues 3-116 (KVLIVDDEPL…RLEKTLHRLR (114 aa)) enclose the Response regulatory domain. 4-aspartylphosphate is present on aspartate 54. The region spanning 137 to 239 (IPCTGHSRIY…LKSLKEAIGL (103 aa)) is the HTH LytTR-type domain.

In terms of processing, phosphorylated by BtsS.

In terms of biological role, member of the two-component regulatory system BtsS/BtsR. BtsR regulates expression of btsT by binding to its promoter region. The polypeptide is Transcriptional regulatory protein BtsR (Salmonella typhimurium (strain LT2 / SGSC1412 / ATCC 700720)).